We begin with the raw amino-acid sequence, 386 residues long: MRSQVIEYPMSLVRLAHELPIEAPRTAWLDSIIKGDCVSALERLPDHSVDVIFADPPYNLQLGGDLHRPDQSMVSAVDDHWDQFESFQAYDAFTRAWLLACRRVLKPNGTIWVIGSYHNIFRVGTQLQDLGFWLLNDIVWRKTNPMPNFRGRRFQNAHETLIWASRDQKGKGYTFNYEAMKAANDDVQMRSDWLFPICTGSERLKDENGDKVHPTQKPEALLARIMMASSKPGDVILDPFFGSGTTGAVAKRLGRHFVGIEREQPYIDAATARINAVEPLGKAELTVMTGKRAEPRVAFTSVMEAGLLRPGTVLCDERRRFAAIVRADGTLTANGEAGSIHRIGARVQGFDACNGWTFWHFEENGVLKPIDALRKIIREQMAAAGA.

An RAMA domain is found at 280-382 (LGKAELTVMT…LRKIIREQMA (103 aa)).

Belongs to the N(4)/N(6)-methyltransferase family.

The catalysed reaction is a 2'-deoxyadenosine in DNA + S-adenosyl-L-methionine = an N(6)-methyl-2'-deoxyadenosine in DNA + S-adenosyl-L-homocysteine + H(+). In terms of biological role, a beta subtype methylase that recognizes the double-stranded sequence 5'-GANTC-3' and methylates A-2 on both strands. CcrM-mediated methylation has important cellular functions. Contributes to the accurate cell-cycle control of DNA replication and cellular morphology. The chain is DNA methyltransferase CcrM (ccrM) from Brucella ovis (strain ATCC 25840 / 63/290 / NCTC 10512).